Here is a 180-residue protein sequence, read N- to C-terminus: Large ribosomal subunit protein uL6 (180 aa).

The protein belongs to the universal ribosomal protein uL6 family. Part of the 50S ribosomal subunit.

Functionally, this protein binds to the 23S rRNA, and is important in its secondary structure. It is located near the subunit interface in the base of the L7/L12 stalk, and near the tRNA binding site of the peptidyltransferase center. This Borrelia recurrentis (strain A1) protein is Large ribosomal subunit protein uL6.